The sequence spans 321 residues: uncharacterized protein (321 aa).

The Exonuclease domain maps to 130–314; sequence NLVYDLETTG…NDVDALIKIM (185 aa).

This is an uncharacterized protein from Acanthamoeba polyphaga (Amoeba).